We begin with the raw amino-acid sequence, 300 residues long: GTPase Era (300 aa).

Residues 8–176 (RCGYVAIVGR…EGLIAKHLPE (169 aa)) enclose the Era-type G domain. A G1 region spans residues 16 to 23 (GRPNVGKS). Residue 16 to 23 (GRPNVGKS) coordinates GTP. The segment at 42-46 (QTTRH) is G2. A G3 region spans residues 63–66 (DTPG). GTP contacts are provided by residues 63–67 (DTPGM) and 125–128 (NKTD). Residues 125–128 (NKTD) form a G4 region. Residues 155–157 (VSA) form a G5 region. A KH type-2 domain is found at 199 to 283 (VREKIMRQLG…MLNLWVKVKG (85 aa)).

This sequence belongs to the TRAFAC class TrmE-Era-EngA-EngB-Septin-like GTPase superfamily. Era GTPase family. In terms of assembly, monomer.

The protein resides in the cytoplasm. It is found in the cell inner membrane. Its function is as follows. An essential GTPase that binds both GDP and GTP, with rapid nucleotide exchange. Plays a role in 16S rRNA processing and 30S ribosomal subunit biogenesis and possibly also in cell cycle regulation and energy metabolism. This Pseudomonas fluorescens (strain ATCC BAA-477 / NRRL B-23932 / Pf-5) protein is GTPase Era.